Reading from the N-terminus, the 100-residue chain is Defensin-6 (100 aa).

Residues 1-19 (MRTLTILTAVLLVALQAKA) form the signal peptide. Residues 20–68 (EPLQAEDEPLQAKAYEADAQEQRGANDQDFAVSFAEDASSSLRALGSTR) constitute a propeptide that is removed on maturation. Intrachain disulfides connect Cys-72–Cys-99, Cys-74–Cys-88, and Cys-78–Cys-98.

The protein belongs to the alpha-defensin family. In terms of assembly, homodimer. Self-assembles into higher-order oligomers termed nanonets, fibril-like structures that entrap microbes. Self-assembly into nanonets seems to protect against proteolytic digestion in duodenal fluid. Interacts with Y.enterocolitica invasin and S.typhimurium fliC/flagellim; the interaction creates an anchoring site for progressive DEFA6 self-assembly into nanonets. In terms of processing, proteolytically cleaved by trypsin at Arg-68; the propeptide is stored in the tissue of the small intestine and the mature peptide is found in the luminal fluid; cleavage may occur during or after release into the lumen. The N-terminal propeptide region suppresses self-assembly and renders DEFA6 propeptide unable to agglutinate bacteria and protect human epithelial cells from bacterial invasion. Under reducing conditions, naturally present in the gut owing to the low redox potential or enzymatically generated by the thioredoxin system, the disulfide bridges are opened leading to a conformational change of DEF6, thereby changing its antimicrobial spectrum. The reduced form exhibits inhibitory activity against anaerobic bacteria, in contrast to the minimal antimicrobial activity of the disulfide-linked oxidized form. The formation of higher-order nanonets and bacterial entrapment is independent of the redox state.

It localises to the secreted. It is found in the cytoplasmic vesicle. The protein localises to the secretory vesicle. Its function is as follows. Host-defense peptide that contributes to intestinal innate immunity and mediates homeostasis at mucosal surfaces by forming higher-order oligomers that capture bacteria and prevent microbial invasion of the epithelium. After binding to bacterial surface proteins, undergoes ordered self-assembly to form fibril-like nanonets that surround and entangle bacteria and thereby prevent bacterial invasion across the epithelial barrier. Entangles and agglutinates Gram-negative bacteria, such as E.coli, S.typhimurium and Y.enterocolitica, and Gram-positive bacteria such as L.monocytogenes, thereby protecting the intestine against invasion by enteric bacterial pathogens. Blocks adhesion of C.albicans to intestinal epithelial cells and thereby suppresses fungal invasion of epithelial cells and biofilm formation. Under reducing conditions and in an acidic environment similar to the intestinal milieu, exhibits inhibitory activity against anaerobic bacteria such as B.adolescentis, L.acidophilus, and B.breve, as well as B.longum and S.thermophilus, possibly by leading to alterations in bacterial cell envelope structures. The disulfide-linked oxidized form exhibits negligible antimicrobial activity against Gram-negative and Gram-positive bacteria, as compared to the enteric defensin DEFA5. The polypeptide is Defensin-6 (DEFA6) (Pan troglodytes (Chimpanzee)).